Here is a 1035-residue protein sequence, read N- to C-terminus: Probable LRR receptor-like serine/threonine-protein kinase At1g53440 (1035 aa).

The N-terminal stretch at 1–26 is a signal peptide; sequence MGFFFSTRKGLLLIIFICLDIFGSNA. Residues 27-607 lie on the Extracellular side of the membrane; that stretch reads QLLPEDEVQT…VDTGKPLSNG (581 aa). N-linked (GlcNAc...) asparagine glycans are attached at residues Asn46, Asn75, Asn83, and Asn110. 7 LRR repeats span residues 87–110, 111–135, 137–158, 160–182, 183–206, 208–232, and 234–254; these read VCRV…EFGN, LTRL…LSQI, LEIL…LGQI, TLTD…LGNL, RSLK…LSNL, NLTN…NWTR, and VRLD…ISNL. Asn194, Asn208, and Asn229 each carry an N-linked (GlcNAc...) asparagine glycan. Residues Asn256 and Asn277 are each glycosylated (N-linked (GlcNAc...) asparagine). LRR repeat units lie at residues 278–302, 303–326, 328–349, and 350–372; these read MTNM…IGTS, MTML…TFRS, NAFN…QFIL, and DSKQ…SCNQ. Residues Asn317, Asn337, Asn361, Asn386, Asn469, and Asn559 are each glycosylated (N-linked (GlcNAc...) asparagine). A helical membrane pass occupies residues 608 to 628; it reads VVAGIVIAACVAFGLLVLVIL. At 629 to 1035 the chain is on the cytoplasmic side; it reads RLTGYLGGKE…LDDLTDVEIE (407 aa). The residue at position 656 (Thr656) is a Phosphothreonine. One can recognise a Protein kinase domain in the interval 667–948; sequence FDPENKIGEG…QGKIKVQPPL (282 aa). Residues 673–681 and Lys695 contribute to the ATP site; that span reads IGEGGFGPV. Tyr740 is subject to Phosphotyrosine. The active-site Proton acceptor is Asp793. Residue Ser826 is modified to Phosphoserine. Thr827 and Thr832 each carry phosphothreonine. At Tyr840 the chain carries Phosphotyrosine. The tract at residues 969 to 1035 is disordered; that stretch reads LSQDSESQVS…LDDLTDVEIE (67 aa). Over residues 972–981 the composition is skewed to polar residues; that stretch reads DSESQVSTYT. Positions 1009 to 1023 are enriched in low complexity; sequence SLLQQEEGNSSSSSR.

Belongs to the protein kinase superfamily. Ser/Thr protein kinase family.

The protein localises to the cell membrane. The enzyme catalyses L-seryl-[protein] + ATP = O-phospho-L-seryl-[protein] + ADP + H(+). The catalysed reaction is L-threonyl-[protein] + ATP = O-phospho-L-threonyl-[protein] + ADP + H(+). The protein is Probable LRR receptor-like serine/threonine-protein kinase At1g53440 of Arabidopsis thaliana (Mouse-ear cress).